The sequence spans 275 residues: Penicillin-insensitive murein endopeptidase (275 aa).

A signal peptide spans 1–19 (MKNWIVGMVALVTMVPVMA). 3 disulfides stabilise this stretch: Cys-44/Cys-264, Cys-187/Cys-235, and Cys-216/Cys-223. Positions 110, 113, 120, 147, and 211 each coordinate Zn(2+). The interval 227 to 262 (DTPPPGDGCGAELESWFQPPPPSAKPGKTLPPPLPP) is disordered. Over residues 244 to 262 (QPPPPSAKPGKTLPPPLPP) the composition is skewed to pro residues.

The protein belongs to the peptidase M74 family. Dimer. The cofactor is Zn(2+).

The protein localises to the periplasm. Functionally, murein endopeptidase that cleaves the D-alanyl-meso-2,6-diamino-pimelyl amide bond that connects peptidoglycan strands. Likely plays a role in the removal of murein from the sacculus. This is Penicillin-insensitive murein endopeptidase from Yersinia pestis bv. Antiqua (strain Antiqua).